We begin with the raw amino-acid sequence, 245 residues long: MVVKLVNNELKILSGKLRDIFREIYNKIKNDENINDRNLDDKVLSLLKDYTISEENLKIKFSEPKDEIYSYEGRRTPYDLLCYGIINGKNFLIFINNKFGDLKSNTRNDVTTYNNLLRLYLGIKRQRLTSEITINGELVYNRISGNEIVSYGIFVVDKYRRGYKFFLLEEIKDDFYVNPRNNMFQIRYSPNLGDPIDYFAFVKKLIDAILESLEKSLNSIKTEILVLNSIKIQLINIKEGKHGED.

The enzyme catalyses Endonucleolytic cleavage of DNA to give specific double-stranded fragments with terminal 5'-phosphates.. A P subtype restriction enzyme that recognizes the double-stranded sequence 5'-GTNNAC-3'; the cleavage site is unknown. This is Type II restriction enzyme MjaIV (mjaIVR) from Methanocaldococcus jannaschii (strain ATCC 43067 / DSM 2661 / JAL-1 / JCM 10045 / NBRC 100440) (Methanococcus jannaschii).